A 91-amino-acid polypeptide reads, in one-letter code: DNA-directed RNA polymerase subunit omega (91 aa).

It belongs to the RNA polymerase subunit omega family. In terms of assembly, the RNAP catalytic core consists of 2 alpha, 1 beta, 1 beta' and 1 omega subunit. When a sigma factor is associated with the core the holoenzyme is formed, which can initiate transcription.

It catalyses the reaction RNA(n) + a ribonucleoside 5'-triphosphate = RNA(n+1) + diphosphate. Its function is as follows. Promotes RNA polymerase assembly. Latches the N- and C-terminal regions of the beta' subunit thereby facilitating its interaction with the beta and alpha subunits. This Pectobacterium carotovorum subsp. carotovorum (strain PC1) protein is DNA-directed RNA polymerase subunit omega.